The following is an 87-amino-acid chain: Small ribosomal subunit protein uS15c (87 aa).

Belongs to the universal ribosomal protein uS15 family. As to quaternary structure, part of the 30S ribosomal subunit.

The protein resides in the plastid. It is found in the chloroplast. The protein is Small ribosomal subunit protein uS15c (rps15) of Oenothera argillicola (Appalachian evening primrose).